The chain runs to 175 residues: RNA pyrophosphohydrolase (175 aa).

Residues 6–149 (GYRPNVGIIL…KRQVYQQALT (144 aa)) enclose the Nudix hydrolase domain. Residues 38 to 59 (GGIKHGESPEQAMYRELYEEVG) carry the Nudix box motif.

It belongs to the Nudix hydrolase family. RppH subfamily. Requires a divalent metal cation as cofactor.

Functionally, accelerates the degradation of transcripts by removing pyrophosphate from the 5'-end of triphosphorylated RNA, leading to a more labile monophosphorylated state that can stimulate subsequent ribonuclease cleavage. This chain is RNA pyrophosphohydrolase, found in Azoarcus sp. (strain BH72).